The following is a 656-amino-acid chain: Putative L-type lectin-domain containing receptor kinase V.2 (656 aa).

An N-terminal signal peptide occupies residues 1–23; it reads MSLLLKMLLFSLFFFYMASISQC. Over 24 to 276 the chain is Extracellular; sequence SDPTGGQFSF…EDQERSLSSK (253 aa). The segment at 29 to 248 is legume-lectin like; that stretch reads GQFSFNGYLY…SHYILGWSFN (220 aa). N78, N124, N159, N190, and N257 each carry an N-linked (GlcNAc...) asparagine glycan. Residues 277 to 297 form a helical membrane-spanning segment; it reads ILAISLSISGVTLVIVLILGV. Residues 298 to 656 lie on the Cytoplasmic side of the membrane; it reads MLFLKRKKFL…MTESFLSSGR (359 aa). The Protein kinase domain maps to 334–615; it reads FKNSEVLGKG…GVATLPHNLL (282 aa). ATP contacts are provided by residues 340 to 348 and K363; that span reads LGKGGFGKV. D459 (proton acceptor) is an active-site residue.

It in the C-terminal section; belongs to the protein kinase superfamily. Ser/Thr protein kinase family. This sequence in the N-terminal section; belongs to the leguminous lectin family.

The protein localises to the cell membrane. The enzyme catalyses L-seryl-[protein] + ATP = O-phospho-L-seryl-[protein] + ADP + H(+). It catalyses the reaction L-threonyl-[protein] + ATP = O-phospho-L-threonyl-[protein] + ADP + H(+). The chain is Putative L-type lectin-domain containing receptor kinase V.2 (LECRK52) from Arabidopsis thaliana (Mouse-ear cress).